Here is a 273-residue protein sequence, read N- to C-terminus: MMIQGFKSSNQEFKFGPWQLTAIKTHIMKSADAEKLAEEMSMPCLPEMMFGDNVLRIQHTSGFGIEFNAKDALKVVKSNQASLKVACAEEWQESRSDSEHNKEVVKPYDWTYTTDYKGTLLGDNMKLNVIPTTDKINTEKLKAREQIMFFEEVLLFEDELHDHGVSSLSVKIRVMPTSFFLLLRYFLRVDGVLIRMNDTRLYHEADKTFMLREYTSKESKISNLSHVPPPLYTEPNEISQYLPVTQTIYEKLEFPSQDLEKAVLVDTKNVTAL.

Belongs to the TIP41 family.

The protein localises to the cytoplasm. In terms of biological role, may be a regulator of serine/threonine-protein phosphatases 2A (PP2A) and 4 (PP4). The chain is TIP41-like protein (tiprl) from Xenopus tropicalis (Western clawed frog).